We begin with the raw amino-acid sequence, 566 residues long: KsdD-like steroid dehydrogenase Rv0785 (566 aa).

23–54 provides a ligand contact to FAD; that stretch reads DAIVVGAGLAGLVAACELADRGLRVLILDQEN.

Belongs to the FAD-dependent oxidoreductase 2 family. It depends on FAD as a cofactor.

The protein operates within lipid metabolism; steroid biosynthesis. Its function is as follows. Able to catalyze the elimination of the C-1 and C-2 hydrogen atoms of the A-ring from the polycyclic ring structure of 3-ketosteroids. This is KsdD-like steroid dehydrogenase Rv0785 from Mycobacterium tuberculosis (strain ATCC 25618 / H37Rv).